The chain runs to 617 residues: Chaperone protein HscA homolog (617 aa).

The protein belongs to the heat shock protein 70 family.

Functionally, probable chaperone. Has a low intrinsic ATPase activity which is markedly stimulated by HscB. This Vibrio parahaemolyticus serotype O3:K6 (strain RIMD 2210633) protein is Chaperone protein HscA homolog.